The chain runs to 148 residues: Large ribosomal subunit protein bL9 (148 aa).

Belongs to the bacterial ribosomal protein bL9 family.

Its function is as follows. Binds to the 23S rRNA. This chain is Large ribosomal subunit protein bL9, found in Sulfurimonas denitrificans (strain ATCC 33889 / DSM 1251) (Thiomicrospira denitrificans (strain ATCC 33889 / DSM 1251)).